The following is a 464-amino-acid chain: tRNA modification GTPase MnmE (464 aa).

(6S)-5-formyl-5,6,7,8-tetrahydrofolate is bound by residues R27, E90, and K129. A TrmE-type G domain is found at 222 to 384 (GITLVLAGSV…LYDKIRTLIS (163 aa)). GTP contacts are provided by residues 232-237 (NAGKSS), 251-257 (SSYPGTT), and 276-279 (DTAG). Positions 236 and 257 each coordinate Mg(2+). K464 provides a ligand contact to (6S)-5-formyl-5,6,7,8-tetrahydrofolate.

The protein belongs to the TRAFAC class TrmE-Era-EngA-EngB-Septin-like GTPase superfamily. TrmE GTPase family. As to quaternary structure, homodimer. Heterotetramer of two MnmE and two MnmG subunits. It depends on K(+) as a cofactor.

The protein resides in the cytoplasm. In terms of biological role, exhibits a very high intrinsic GTPase hydrolysis rate. Involved in the addition of a carboxymethylaminomethyl (cmnm) group at the wobble position (U34) of certain tRNAs, forming tRNA-cmnm(5)s(2)U34. This is tRNA modification GTPase MnmE from Borreliella afzelii (strain PKo) (Borrelia afzelii).